The chain runs to 287 residues: ATP synthase gamma chain (287 aa).

The protein belongs to the ATPase gamma chain family. F-type ATPases have 2 components, CF(1) - the catalytic core - and CF(0) - the membrane proton channel. CF(1) has five subunits: alpha(3), beta(3), gamma(1), delta(1), epsilon(1). CF(0) has three main subunits: a, b and c.

The protein resides in the cell inner membrane. Produces ATP from ADP in the presence of a proton gradient across the membrane. The gamma chain is believed to be important in regulating ATPase activity and the flow of protons through the CF(0) complex. The polypeptide is ATP synthase gamma chain (Parabacteroides distasonis (strain ATCC 8503 / DSM 20701 / CIP 104284 / JCM 5825 / NCTC 11152)).